A 420-amino-acid polypeptide reads, in one-letter code: Glutamate-1-semialdehyde 2,1-aminomutase (420 aa).

The residue at position 259 (K259) is an N6-(pyridoxal phosphate)lysine.

This sequence belongs to the class-III pyridoxal-phosphate-dependent aminotransferase family. HemL subfamily. As to quaternary structure, homodimer. Requires pyridoxal 5'-phosphate as cofactor.

It is found in the cytoplasm. The enzyme catalyses (S)-4-amino-5-oxopentanoate = 5-aminolevulinate. It participates in porphyrin-containing compound metabolism; protoporphyrin-IX biosynthesis; 5-aminolevulinate from L-glutamyl-tRNA(Glu): step 2/2. The sequence is that of Glutamate-1-semialdehyde 2,1-aminomutase from Nautilia profundicola (strain ATCC BAA-1463 / DSM 18972 / AmH).